The chain runs to 505 residues: Katanin p60 ATPase-containing subunit A-like 2 (505 aa).

One can recognise a LisH domain in the interval 25–57 (RRKNLLILIMHYLLQEGYVDSANSLEQETKISS). Disordered stretches follow at residues 94-127 (LDHD…IGQQ) and 140-167 (RTNG…EASE). Polar residues-rich tracts occupy residues 114-127 (GSNS…IGQQ) and 155-164 (QESGGNSPQE). Residue 298–305 (GPPGTGKT) coordinates ATP.

This sequence belongs to the AAA ATPase family. Katanin p60 subunit A1 subfamily. A-like 2 sub-subfamily.

The protein resides in the cytoplasm. It is found in the cytoskeleton. It localises to the spindle. Its subcellular location is the spindle pole. The enzyme catalyses n ATP + n H2O + a microtubule = n ADP + n phosphate + (n+1) alpha/beta tubulin heterodimers.. Severs microtubules in vitro in an ATP-dependent manner. This activity may promote rapid reorganization of cellular microtubule arrays. This Xenopus laevis (African clawed frog) protein is Katanin p60 ATPase-containing subunit A-like 2 (katnal2).